The following is a 456-amino-acid chain: Chromosomal replication initiator protein DnaA 1 (456 aa).

Positions 1-68 are domain I, interacts with DnaA modulators; it reads MRAWEEFLLL…KANLINNNGK (68 aa). The tract at residues 68–101 is domain II; it reads KPIRVRVTSLDKSTPFKESQIQQEKTAYFTMQYG. The interval 102-320 is domain III, AAA+ region; sequence DIDPQMSFAN…HALTTLAKRV (219 aa). The ATP site is built by S150, G152, K153, and T154. Positions 321–456 are domain IV, binds dsDNA; the sequence is AYKKLSHQLL…AYQSLDLIVD (136 aa).

This sequence belongs to the DnaA family. Oligomerizes as a right-handed, spiral filament on DNA at oriC.

Its subcellular location is the cytoplasm. Its function is as follows. Plays an essential role in the initiation and regulation of chromosomal replication. ATP-DnaA binds to the origin of replication (oriC) to initiate formation of the DNA replication initiation complex once per cell cycle. Binds the DnaA box (a 9 base pair repeat at the origin) and separates the double-stranded (ds)DNA. Forms a right-handed helical filament on oriC DNA; dsDNA binds to the exterior of the filament while single-stranded (ss)DNA is stabiized in the filament's interior. The ATP-DnaA-oriC complex binds and stabilizes one strand of the AT-rich DNA unwinding element (DUE), permitting loading of DNA polymerase. After initiation quickly degrades to an ADP-DnaA complex that is not apt for DNA replication. Binds acidic phospholipids. The polypeptide is Chromosomal replication initiator protein DnaA 1 (Chlamydia muridarum (strain MoPn / Nigg)).